Here is a 321-residue protein sequence, read N- to C-terminus: Sideroflexin-3 (321 aa).

Position 1 is an N-acetylmethionine (M1). The next 4 membrane-spanning stretches (helical) occupy residues 146–164, 174–194, 225–245, and 266–286; these read LGTAYVSATTGAVATALGL, LVGRFVPFAAVAAANCINIPL, IFQVVISRIGMAIPAMAIPPV, and LQVGLVGFCLVFATPLCCALF.

Belongs to the sideroflexin family. In terms of tissue distribution, widely expressed.

It is found in the mitochondrion membrane. It carries out the reaction L-serine(in) = L-serine(out). Functionally, mitochondrial serine transporter that mediates transport of serine into mitochondria, an important step of the one-carbon metabolism pathway. Mitochondrial serine is converted to glycine and formate, which then exits to the cytosol where it is used to generate the charged folates that serve as one-carbon donors. This chain is Sideroflexin-3, found in Mus musculus (Mouse).